An 821-amino-acid polypeptide reads, in one-letter code: Probable E3 ubiquitin-protein ligase hulA (821 aa).

The C2 domain maps to 1-112 (MGSNLPAQPN…QMGGDEMLTR (112 aa)). Disordered regions lie at residues 140-240 (PNQA…WERR) and 255-359 (RTTT…YFVD). 4 stretches are compositionally biased toward polar residues: residues 151 to 173 (AQSS…SVSP), 181 to 201 (AASN…PTST), 217 to 228 (QGSRTNLSSFED), and 255 to 272 (RTTT…QTQR). The WW 1 domain maps to 231–264 (GRLPAGWERREDNLGRTYYVDHNTRTTTWTRPSS). The segment covering 281-296 (LERRAHQSRMLPEDRT) has biased composition (basic and acidic residues). The segment covering 297-306 (GANSPNLQES) has biased composition (polar residues). Residues 311–339 (PQQAHTPPAGGSASAVSMMATGATTAGTG) are compositionally biased toward low complexity. WW domains are found at residues 339-372 (GELP…DPRR) and 399-432 (GPLP…DPRL). The region spanning 488-821 (SASDLKKRLM…VEETLGFGQE (334 aa)) is the HECT domain. Cysteine 789 serves as the catalytic Glycyl thioester intermediate.

This sequence belongs to the RSP5/NEDD4 family. As to quaternary structure, interacts with creD.

It localises to the cytoplasm. The enzyme catalyses S-ubiquitinyl-[E2 ubiquitin-conjugating enzyme]-L-cysteine + [acceptor protein]-L-lysine = [E2 ubiquitin-conjugating enzyme]-L-cysteine + N(6)-ubiquitinyl-[acceptor protein]-L-lysine.. It functions in the pathway protein modification; protein ubiquitination. Its function is as follows. E3 ubiquitin-protein ligase which accepts ubiquitin from an E2 ubiquitin-conjugating enzyme in the form of a thioester and then directly transfers the ubiquitin to targeted substrates. Probably involved in the regulatory network controlling carbon source utilization. The sequence is that of Probable E3 ubiquitin-protein ligase hulA (hulA) from Aspergillus niger (strain ATCC MYA-4892 / CBS 513.88 / FGSC A1513).